Consider the following 120-residue polypeptide: Large ribosomal subunit protein bL17 (120 aa).

This sequence belongs to the bacterial ribosomal protein bL17 family. As to quaternary structure, part of the 50S ribosomal subunit. Contacts protein L32.

The sequence is that of Large ribosomal subunit protein bL17 from Bacillus licheniformis (strain ATCC 14580 / DSM 13 / JCM 2505 / CCUG 7422 / NBRC 12200 / NCIMB 9375 / NCTC 10341 / NRRL NRS-1264 / Gibson 46).